The sequence spans 1377 residues: DNA-directed RNA polymerase subunit beta (1377 aa).

It belongs to the RNA polymerase beta chain family. As to quaternary structure, the RNAP catalytic core consists of 2 alpha, 1 beta, 1 beta' and 1 omega subunit. When a sigma factor is associated with the core the holoenzyme is formed, which can initiate transcription.

The catalysed reaction is RNA(n) + a ribonucleoside 5'-triphosphate = RNA(n+1) + diphosphate. Functionally, DNA-dependent RNA polymerase catalyzes the transcription of DNA into RNA using the four ribonucleoside triphosphates as substrates. The polypeptide is DNA-directed RNA polymerase subunit beta (Aromatoleum aromaticum (strain DSM 19018 / LMG 30748 / EbN1) (Azoarcus sp. (strain EbN1))).